Consider the following 330-residue polypeptide: 4-hydroxythreonine-4-phosphate dehydrogenase (330 aa).

Substrate-binding residues include His-133 and Thr-134. Residues His-163, His-208, and His-263 each coordinate a divalent metal cation. Residues Lys-271, Asn-280, and Arg-289 each contribute to the substrate site.

It belongs to the PdxA family. In terms of assembly, homodimer. The cofactor is Zn(2+). Mg(2+) is required as a cofactor. Requires Co(2+) as cofactor.

Its subcellular location is the cytoplasm. The catalysed reaction is 4-(phosphooxy)-L-threonine + NAD(+) = 3-amino-2-oxopropyl phosphate + CO2 + NADH. It participates in cofactor biosynthesis; pyridoxine 5'-phosphate biosynthesis; pyridoxine 5'-phosphate from D-erythrose 4-phosphate: step 4/5. Its function is as follows. Catalyzes the NAD(P)-dependent oxidation of 4-(phosphooxy)-L-threonine (HTP) into 2-amino-3-oxo-4-(phosphooxy)butyric acid which spontaneously decarboxylates to form 3-amino-2-oxopropyl phosphate (AHAP). The polypeptide is 4-hydroxythreonine-4-phosphate dehydrogenase (Azoarcus sp. (strain BH72)).